We begin with the raw amino-acid sequence, 46 residues long: MISMLRCIYLFLSVILITSYFVTPVMPCNCKAPETALCARRCQQHG.

Residues 1–27 (MISMLRCIYLFLSVILITSYFVTPVMP) form the signal peptide. Cystine bridges form between Cys28–Cys38 and Cys30–Cys42. The interval 40–41 (RR) is essential for toxin activity. His45 carries the histidine amide modification.

Expressed by the venom gland.

The protein resides in the secreted. Functionally, toxin with unique selectivity to KCa2 channels. Potently blocks human, rat and mouse KCa2.2/KCNN2/SK2 channels (IC(50)=27-140 pM), and moderately blocks human and rat KCa2.3/KCNN3/SK3 channels (IC(50)=0.6-4 nM), and human (IC(50)=0.7-12 nM) and mouse (IC(50)=28 nM) KCa2.1/KCNN1/SK1 channels. Does not show any antimicrobial activity. In vivo, intracerebroventricular injection into rats of a dose of 1 ng results in neurodegeneration specifically in the Purkinje cells of the cerebellum, and induces seizures characterized by hypersensitivity to noise, loss of postural control, paroxystic jerking, and alternating periods of great agitation with tonic-clonic convulsions and periods of total prostration. When administered at high doses, exerts anti-inflammatory, anti-oxidative, anti-fibrotic and anti-apoptotic properties in several models of inflammatory disease, including gouty arthritis, atherosclerosis, atopic dermatitis and acute kidney injury. Down-regulates pro-inflammatory signaling pathways, such as the NF-kappaB and STAT3 pathways, probably by blocking SK channels such as KCa2.2/KCNN2/SK2 and/or KCa2.3/KCNN3/SK3 which are thought to be involved in promoting some inflammatory responses. For example in mouse and rat microglia cells, inhibits LPS-activated KCa2.2/KCNN2/SK2 channels and TLR4 expression leading to the down-regulation of the NF-kappaB, STAT, and MAPK/ERK signaling pathways and, as a consequence, decreases secretion of pro-inflammatory cytokines. The protein is Apamin of Apis mellifera (Honeybee).